The chain runs to 332 residues: Transaldolase (332 aa).

Lysine 136 (schiff-base intermediate with substrate) is an active-site residue.

It belongs to the transaldolase family. Type 1 subfamily.

The protein resides in the cytoplasm. The catalysed reaction is D-sedoheptulose 7-phosphate + D-glyceraldehyde 3-phosphate = D-erythrose 4-phosphate + beta-D-fructose 6-phosphate. It participates in carbohydrate degradation; pentose phosphate pathway; D-glyceraldehyde 3-phosphate and beta-D-fructose 6-phosphate from D-ribose 5-phosphate and D-xylulose 5-phosphate (non-oxidative stage): step 2/3. Transaldolase is important for the balance of metabolites in the pentose-phosphate pathway. This Nostoc sp. (strain PCC 7120 / SAG 25.82 / UTEX 2576) protein is Transaldolase.